The chain runs to 450 residues: Tubulin beta-3 chain (450 aa).

The MREI motif signature appears at 1-4 (MREI). Residues Gln-11, Glu-69, Ser-138, Gly-142, Thr-143, and Gly-144 each coordinate GTP. Glu-69 is a binding site for Mg(2+). Ser-172 carries the phosphoserine; by CDK1 modification. GTP-binding residues include Asn-204 and Asn-226. Positions 422–450 (YQQYQDATAEEEGEMYEDDDEESEAQGPK) are disordered. A compositionally biased stretch (acidic residues) spans 429-450 (TAEEEGEMYEDDDEESEAQGPK). Glu-438 bears the 5-glutamyl polyglutamate mark. Position 444 is a phosphoserine (Ser-444).

The protein belongs to the tubulin family. As to quaternary structure, heterodimer of alpha- and beta-tubulin. A typical microtubule is a hollow water-filled tube with an outer diameter of 25 nm and an inner diameter of 15 nM. Alpha-beta heterodimers associate head-to-tail to form protofilaments running lengthwise along the microtubule wall with the beta-tubulin subunit facing the microtubule plus end conferring a structural polarity. Microtubules usually have 13 protofilaments but different protofilament numbers can be found in some organisms and specialized cells. Interacts with gamma-tubulin; the interaction allows microtubules to nucleate from the gamma-tubulin ring complex (gTuRC). Interacts with UNC5C (via cytoplasmic domain); this interaction is decreased by NTN1/Netrin-1. Interacts with NLRP5/MATER at cytoskeleton microtubules. Interacts with DPYSL5. Interacts with CFAP61. The cofactor is Mg(2+). In terms of processing, some glutamate residues at the C-terminus are polyglycylated, resulting in polyglycine chains on the gamma-carboxyl group. Glycylation is mainly limited to tubulin incorporated into axonemes (cilia and flagella) whereas glutamylation is prevalent in neuronal cells, centrioles, axonemes, and the mitotic spindle. Both modifications can coexist on the same protein on adjacent residues, and lowering polyglycylation levels increases polyglutamylation, and reciprocally. Cilia and flagella glycylation is required for their stability and maintenance. Flagella glycylation controls sperm motility. Post-translationally, some glutamate residues at the C-terminus are polyglutamylated, resulting in polyglutamate chains on the gamma-carboxyl group. Polyglutamylation plays a key role in microtubule severing by spastin (SPAST). SPAST preferentially recognizes and acts on microtubules decorated with short polyglutamate tails: severing activity by SPAST increases as the number of glutamates per tubulin rises from one to eight, but decreases beyond this glutamylation threshold. Glutamylation is also involved in cilia motility. Phosphorylated on Ser-172 by CDK1 during the cell cycle, from metaphase to telophase, but not in interphase. This phosphorylation inhibits tubulin incorporation into microtubules.

The protein resides in the cytoplasm. It localises to the cytoskeleton. The protein localises to the cell projection. It is found in the growth cone. Its subcellular location is the lamellipodium. The protein resides in the filopodium. Functionally, tubulin is the major constituent of microtubules, protein filaments consisting of alpha- and beta-tubulin heterodimers. Microtubules grow by the addition of GTP-tubulin dimers to the microtubule end, where a stabilizing cap forms. Below the cap, alpha-beta tubulin heterodimers are in GDP-bound state, owing to GTPase activity of alpha-tubulin. TUBB3 plays a critical role in proper axon guidance and maintenance. Binding of NTN1/Netrin-1 to its receptor UNC5C might cause dissociation of UNC5C from polymerized TUBB3 in microtubules and thereby lead to increased microtubule dynamics and axon repulsion. Plays a role in dorsal root ganglion axon projection towards the spinal cord. The sequence is that of Tubulin beta-3 chain (Tubb3) from Rattus norvegicus (Rat).